Here is a 259-residue protein sequence, read N- to C-terminus: Putative carbamate hydrolase RutD (259 aa).

This sequence belongs to the AB hydrolase superfamily. Hydrolase RutD family.

The enzyme catalyses carbamate + 2 H(+) = NH4(+) + CO2. Its function is as follows. Involved in pyrimidine catabolism. May facilitate the hydrolysis of carbamate, a reaction that can also occur spontaneously. This is Putative carbamate hydrolase RutD from Pseudomonas savastanoi pv. phaseolicola (strain 1448A / Race 6) (Pseudomonas syringae pv. phaseolicola (strain 1448A / Race 6)).